The primary structure comprises 501 residues: Acetyl-coenzyme A carboxylase carboxyl transferase subunit beta, chloroplastic (501 aa).

Positions 231 to 501 constitute a CoA carboxyltransferase N-terminal domain; the sequence is LWIECENCYG…LIQNEKESRS (271 aa). 4 residues coordinate Zn(2+): Cys-235, Cys-238, Cys-254, and Cys-257. The C4-type zinc finger occupies 235 to 257; the sequence is CENCYGLNYKKILKSKMNICEHC.

It belongs to the AccD/PCCB family. As to quaternary structure, acetyl-CoA carboxylase is a heterohexamer composed of biotin carboxyl carrier protein, biotin carboxylase and 2 subunits each of ACCase subunit alpha and ACCase plastid-coded subunit beta (accD). It depends on Zn(2+) as a cofactor.

The protein resides in the plastid. It is found in the chloroplast stroma. The catalysed reaction is N(6)-carboxybiotinyl-L-lysyl-[protein] + acetyl-CoA = N(6)-biotinyl-L-lysyl-[protein] + malonyl-CoA. The protein operates within lipid metabolism; malonyl-CoA biosynthesis; malonyl-CoA from acetyl-CoA: step 1/1. Component of the acetyl coenzyme A carboxylase (ACC) complex. Biotin carboxylase (BC) catalyzes the carboxylation of biotin on its carrier protein (BCCP) and then the CO(2) group is transferred by the transcarboxylase to acetyl-CoA to form malonyl-CoA. The sequence is that of Acetyl-coenzyme A carboxylase carboxyl transferase subunit beta, chloroplastic from Lotus japonicus (Lotus corniculatus var. japonicus).